Here is a 101-residue protein sequence, read N- to C-terminus: Secreted RxLR effector protein 64 (101 aa).

Residues 1–23 (MMSPPMTTTLMFILNYAIISFHG) form the signal peptide. A RxLR motif is present at residues 48–51 (RELR). Residues 67–87 (LQPILPLPLCLPFPLVPASIF) traverse the membrane as a helical segment.

The protein belongs to the RxLR effector family.

The protein localises to the secreted. It is found in the host cytoplasm. It localises to the host nucleus. Its subcellular location is the membrane. Functionally, effector that acts as a broad suppressor of cell death to interrupt plant immunity. Inhibits cell death induced by cell death-inducing proteins, including the PAMP elicitor INF1 from P.infestans. This chain is Secreted RxLR effector protein 64, found in Plasmopara viticola (Downy mildew of grapevine).